Reading from the N-terminus, the 282-residue chain is MLPKNAIEKIQANVSKPCFWKSLSPGQTWKSKSMRIIPEDFVRRTRGAFEHRVVFSVRWENSWQLWLEREKNELFMIEEDWNEFVDDNHLGPNDNLFIKHDETMNLEVQIFKNNGVEIIDVPLGVEPETEPFHPTPKKPHKETTPASSFASGSGCSANGGTNGRGKQRSSDVKNPERYLLNPENPYFVQAVTKRNDVLYVSRPVVQSYRLKFGPVKSTITYLLPGEKKEEGENRIYNGKPCFSGWSVLCRRHNLNIGDSVVCELERSGGVVTAVRVHFVKKD.

The TF-B3 DNA-binding region spans 20–114 (WKSLSPGQTW…NLEVQIFKNN (95 aa)). Residues 127–178 (PETEPFHPTPKKPHKETTPASSFASGSGCSANGGTNGRGKQRSSDVKNPERY) are disordered. Over residues 144–159 (TPASSFASGSGCSANG) the composition is skewed to low complexity.

It is found in the nucleus. This Arabidopsis thaliana (Mouse-ear cress) protein is B3 domain-containing protein At5g25475.